We begin with the raw amino-acid sequence, 365 residues long: L-lactate oxidase (365 aa).

Residues Thr2 to Leu365 enclose the FMN hydroxy acid dehydrogenase domain. Tyr28 is a pyruvate binding site. Residues Pro81 to Ala83, Ser110, and Gln135 each bind FMN. A pyruvate-binding site is contributed by Tyr137. Residue Thr163 coordinates FMN. Arg172 contributes to the pyruvate binding site. Residues Lys239 and Ser261 each contribute to the FMN site. 2 residues coordinate pyruvate: His263 and Arg266. The Proton acceptor role is filled by His263. FMN is bound by residues Asp294–Arg298 and Arg318.

The protein belongs to the FMN-dependent alpha-hydroxy acid dehydrogenase family. Homotetramer. FMN serves as cofactor.

The catalysed reaction is (S)-lactate + O2 = pyruvate + H2O2. The enzyme catalyses glyoxylate + O2 + H2O = oxalate + H2O2 + H(+). Functionally, catalyzes the oxidation of (S)-lactate (L-lactate) to pyruvate, with a reduction of O2 to H2O2. In extant N2-fixing cyanobacteria such as Nostoc, this enzyme primarily serves as an O2-scavenging enzyme, protecting nitrogenase that is extremely sensitive to O2, and is therefore an essential partner in N2 fixation. Also shows clear oxidase activity with glyoxylate in vitro, and low activity with glycerate, hydroxypyruvate and glycolate. The very low glycolate oxidase activity indicates that this enzyme is unlikely to be involved in photorespiratory glycolate metabolism, a pathway that seems to exist in this cyanobacterium, but in which the oxidation of glycolate is taken over by glycolate dehydrogenase (GlcD). Is not able to use D-lactate as substrate and does not show any dehydrogenase activity with NAD(+) or NADP(+). The polypeptide is L-lactate oxidase (Nostoc sp. (strain PCC 7120 / SAG 25.82 / UTEX 2576)).